The sequence spans 192 residues: ATP synthase protein MI25 (192 aa).

A helical transmembrane segment spans residues 29–49 (ILIYNEEMIVALCFIGFIIFS).

It belongs to the ATPase protein MI25 family. As to quaternary structure, F-type ATPases have 2 components, CF(1) - the catalytic core - and CF(0) - the membrane proton channel. CF(1) has five subunits: alpha(3), beta(3), gamma(1), delta(1), epsilon(1). CF(0) has three main subunits: a, b and c.

It localises to the mitochondrion membrane. This is one of the chains of the nonenzymatic component (CF(0) subunit) of the mitochondrial ATPase complex. The chain is ATP synthase protein MI25 (ATP4) from Arabidopsis thaliana (Mouse-ear cress).